Here is a 68-residue protein sequence, read N- to C-terminus: Large ribosomal subunit protein bL35 (68 aa).

It belongs to the bacterial ribosomal protein bL35 family.

This is Large ribosomal subunit protein bL35 from Onion yellows phytoplasma (strain OY-M).